The primary structure comprises 332 residues: MEDKKKIIFSGIKPSGDLTLGNYLGAIKNWTKLQEEYDCYFCVVDLHAITVKQLPADLRRRTLEVLAIYIASGINPEENTLFIQSHVPAHSEASWLLTCNSYMGELSRMTQYKDKSKKMGDSIGAGLFNYPVLMAADILLYNADLVPVGKDQMQHLELARDIGTRFNNSYSKTFTIPEGYVPKEGAKIMDLQDPSKKMSKSDANPNGFILIMDEPNVIRKKISRAVTDSIGIVNYTDEQPGVKNLINILCAIKGYTPDEVVKMYDGKGYAEFKNDVAEAIVEELAPVQEKVKALLGDKKALEEIYKKGAEKANYAAMKTLRKMQKKIGLIPR.

Residues 13-15 and 21-22 contribute to the ATP site; these read KPS and GN. A 'HIGH' region motif is present at residues 14-22; sequence PSGDLTLGN. Aspartate 137 provides a ligand contact to L-tryptophan. ATP-binding positions include 149–151, isoleucine 188, and 197–201; these read GKD and KMSKS. A 'KMSKS' region motif is present at residues 197 to 201; that stretch reads KMSKS.

The protein belongs to the class-I aminoacyl-tRNA synthetase family. As to quaternary structure, homodimer.

The protein localises to the cytoplasm. It catalyses the reaction tRNA(Trp) + L-tryptophan + ATP = L-tryptophyl-tRNA(Trp) + AMP + diphosphate + H(+). Its function is as follows. Catalyzes the attachment of tryptophan to tRNA(Trp). This Clostridium perfringens (strain 13 / Type A) protein is Tryptophan--tRNA ligase.